A 206-amino-acid chain; its full sequence is Ribosomal RNA small subunit methyltransferase G (206 aa).

Residues G71, F76, 125 to 126 (IE), and R139 each bind S-adenosyl-L-methionine.

This sequence belongs to the methyltransferase superfamily. RNA methyltransferase RsmG family.

It is found in the cytoplasm. It carries out the reaction guanosine(527) in 16S rRNA + S-adenosyl-L-methionine = N(7)-methylguanosine(527) in 16S rRNA + S-adenosyl-L-homocysteine. Its function is as follows. Specifically methylates the N7 position of guanine in position 527 of 16S rRNA. The sequence is that of Ribosomal RNA small subunit methyltransferase G from Cereibacter sphaeroides (strain ATCC 17029 / ATH 2.4.9) (Rhodobacter sphaeroides).